The following is an 82-amino-acid chain: Small ribosomal subunit protein bS16 (82 aa).

It belongs to the bacterial ribosomal protein bS16 family.

The polypeptide is Small ribosomal subunit protein bS16 (Aeromonas salmonicida (strain A449)).